The chain runs to 199 residues: Superoxide dismutase [Mn/Fe] (199 aa).

Fe(3+)-binding residues include histidine 27, histidine 81, aspartate 161, and histidine 165. The Mn(2+) site is built by histidine 27, histidine 81, aspartate 161, and histidine 165.

The protein belongs to the iron/manganese superoxide dismutase family. In terms of assembly, homodimer. It depends on Mn(2+) as a cofactor. Requires Fe(3+) as cofactor.

The enzyme catalyses 2 superoxide + 2 H(+) = H2O2 + O2. In terms of biological role, destroys superoxide anion radicals which are normally produced within the cells and which are toxic to biological systems. Catalyzes the dismutation of superoxide anion radicals into O2 and H2O2 by successive reduction and oxidation of the transition metal ion at the active site. This is Superoxide dismutase [Mn/Fe] (sodA) from Staphylococcus saprophyticus subsp. saprophyticus (strain ATCC 15305 / DSM 20229 / NCIMB 8711 / NCTC 7292 / S-41).